The sequence spans 292 residues: ATP synthase gamma chain (292 aa).

It belongs to the ATPase gamma chain family. As to quaternary structure, F-type ATPases have 2 components, CF(1) - the catalytic core - and CF(0) - the membrane proton channel. CF(1) has five subunits: alpha(3), beta(3), gamma(1), delta(1), epsilon(1). CF(0) has three main subunits: a, b and c.

Its subcellular location is the cell membrane. Functionally, produces ATP from ADP in the presence of a proton gradient across the membrane. The gamma chain is believed to be important in regulating ATPase activity and the flow of protons through the CF(0) complex. The chain is ATP synthase gamma chain from Prosthecochloris aestuarii (strain DSM 271 / SK 413).